A 209-amino-acid polypeptide reads, in one-letter code: Large ribosomal subunit protein uL3 (209 aa).

It belongs to the universal ribosomal protein uL3 family. Part of the 50S ribosomal subunit. Forms a cluster with proteins L14 and L19.

In terms of biological role, one of the primary rRNA binding proteins, it binds directly near the 3'-end of the 23S rRNA, where it nucleates assembly of the 50S subunit. The polypeptide is Large ribosomal subunit protein uL3 (Lactiplantibacillus plantarum (strain ATCC BAA-793 / NCIMB 8826 / WCFS1) (Lactobacillus plantarum)).